A 220-amino-acid chain; its full sequence is Deoxyribose-phosphate aldolase (220 aa).

The active-site Proton donor/acceptor is Asp89. Lys151 serves as the catalytic Schiff-base intermediate with acetaldehyde. Lys180 (proton donor/acceptor) is an active-site residue.

The protein belongs to the DeoC/FbaB aldolase family. DeoC type 1 subfamily.

The protein localises to the cytoplasm. The catalysed reaction is 2-deoxy-D-ribose 5-phosphate = D-glyceraldehyde 3-phosphate + acetaldehyde. The protein operates within carbohydrate degradation; 2-deoxy-D-ribose 1-phosphate degradation; D-glyceraldehyde 3-phosphate and acetaldehyde from 2-deoxy-alpha-D-ribose 1-phosphate: step 2/2. Its function is as follows. Catalyzes a reversible aldol reaction between acetaldehyde and D-glyceraldehyde 3-phosphate to generate 2-deoxy-D-ribose 5-phosphate. This is Deoxyribose-phosphate aldolase from Staphylococcus epidermidis (strain ATCC 35984 / DSM 28319 / BCRC 17069 / CCUG 31568 / BM 3577 / RP62A).